A 155-amino-acid chain; its full sequence is Reticulon-like protein B23 (155 aa).

The region spanning 1–155 (MGEMGKAIGL…LNRRNGEILD (155 aa)) is the Reticulon domain. Helical transmembrane passes span 30 to 50 (SLIS…GLLF) and 117 to 137 (IISG…SMLF).

It is found in the endoplasmic reticulum membrane. The chain is Reticulon-like protein B23 (RTNLB23) from Arabidopsis thaliana (Mouse-ear cress).